Reading from the N-terminus, the 414-residue chain is TAR DNA-binding protein 43 (414 aa).

Residues K79, K84, K95, K102, and K181 each participate in a glycyl lysine isopeptide (Lys-Gly) (interchain with G-Cter in SUMO2) cross-link. RRM domains lie at S104–E200 and R191–P262. The residue at position 183 (S183) is a Phosphoserine. Residues E216–M414 are interaction with UBQLN2. Over residues E261 to G274 the composition is skewed to basic and acidic residues. Disordered regions lie at residues E261–N301 and A341–M414. K263 is covalently cross-linked (Glycyl lysine isopeptide (Lys-Gly) (interchain with G-Cter in SUMO2)). Positions R275–N301 are enriched in gly residues. S292 carries the phosphoserine modification. The residue at position 293 (R293) is an Omega-N-methylarginine. Composition is skewed to low complexity over residues S342–S358 and G368–G392. A compositionally biased stretch (gly residues) spans S393–G402. The span at M405–M414 shows a compositional bias: polar residues.

In terms of assembly, homodimer. Homooligomer (via its N-terminal domain). Interacts with BRDT. Binds specifically to pyrimidine-rich motifs of TAR DNA and to single stranded TG repeated sequences. Binds to RNA, specifically to UG repeated sequences with a minimum of six contiguous repeats. Interacts with ATXN2; the interaction is RNA-dependent. Interacts with MATR3. Interacts with UBQLN2. Interacts with HNRNPA2B1. Interacts with ZNF106. Interacts with CNOT7/CAF1. Interacts with CRY2. Interacts with PPIA/CYPA; the interaction is dependent on RNA-binding activity of TARDBP and PPIase activity of PPIA/CYPA. Acetylation of PPIA/CYPA at 'Lys-125' favors the interaction of TARDBP with PPIA/CYPA. Post-translationally, hyperphosphorylated. In terms of processing, ubiquitinated.

It localises to the nucleus. It is found in the cytoplasm. The protein localises to the stress granule. The protein resides in the mitochondrion. RNA-binding protein that is involved in various steps of RNA biogenesis and processing. Preferentially binds, via its two RNA recognition motifs RRM1 and RRM2, to GU-repeats on RNA molecules predominantly localized within long introns and in the 3'UTR of mRNAs. In turn, regulates the splicing of many non-coding and protein-coding RNAs including proteins involved in neuronal survival, as well as mRNAs that encode proteins relevant for neurodegenerative diseases. Plays a role in maintaining mitochondrial homeostasis by regulating the processing of mitochondrial transcripts. Also regulates mRNA stability by recruiting CNOT7/CAF1 deadenylase on mRNA 3'UTR leading to poly(A) tail deadenylation and thus shortening. In response to oxidative insult, associates with stalled ribosomes localized to stress granules (SGs) and contributes to cell survival. Also participates in the normal skeletal muscle formation and regeneration, forming cytoplasmic myo-granules and binding mRNAs that encode sarcomeric proteins. Plays a role in the maintenance of the circadian clock periodicity via stabilization of the CRY1 and CRY2 proteins in a FBXL3-dependent manner. Negatively regulates the expression of CDK6. Regulates the expression of HDAC6, ATG7 and VCP in a PPIA/CYPA-dependent manner. The sequence is that of TAR DNA-binding protein 43 (Tardbp) from Mus musculus (Mouse).